Reading from the N-terminus, the 891-residue chain is Metabotropic glutamate receptor-like protein N (891 aa).

Over 1 to 399 the chain is Extracellular; the sequence is MKLYTHKINR…FKPISKTIEY (399 aa). 13 N-linked (GlcNAc...) asparagine glycosylation sites follow: Asn52, Asn85, Asn88, Asn125, Asn132, Asn224, Asn298, Asn312, Asn320, Asn325, Asn353, Asn363, and Asn375. The interval 52 to 91 is disordered; it reads NNSNSNSNNNNNNNNNNNNNNNNNNNNNNNNNNNNSNNSN. A helical transmembrane segment spans residues 400-420; the sequence is GITIVSSILIGALIIIQICII. The Cytoplasmic segment spans residues 421-433; it reads KYKNKPSFKSASP. Residues 434–454 form a helical membrane-spanning segment; sequence TFLIFIVIGGIFVYIGVIIWV. Residues 455 to 461 are Extracellular-facing; that stretch reads SGVNVFT. Residues 462-482 traverse the membrane as a helical segment; it reads CNAKFWLISLGLTTMIGGIVV. Residues 483 to 505 lie on the Cytoplasmic side of the membrane; sequence KNFRIWLIFDNPKLYHIKITNLQ. A helical membrane pass occupies residues 506–526; it reads LLPWVLGMFLLNVFLLSLITG. Topologically, residues 527 to 555 are extracellular; sequence LGKLTPFKVFPNDEKFSSYEIQCEMMDGG. A helical transmembrane segment spans residues 556–576; the sequence is LIALYFLLGYFAIIVMIGIFV. Over 577–592 the chain is Cytoplasmic; sequence SWKIRIVDIEEFNESK. The helical transmembrane segment at 593–613 threads the bilayer; the sequence is SVAYSLYSIVFCLLIIAPLTI. The Extracellular segment spans residues 614 to 625; sequence SKTGHNTEILCS. The chain crosses the membrane as a helical span at residues 626-646; sequence GFIFIVAAIITIMFIPKFWAL. The Cytoplasmic portion of the chain corresponds to 647–891; it reads KIYGAEGSNE…SDSNSDSIIQ (245 aa). Disordered stretches follow at residues 660–689, 742–827, and 869–891; these read QSSS…KKSS, NEMT…ILTP, and DEVI…SIIQ. The span at 742–767 shows a compositional bias: polar residues; the sequence is NEMTYNDDPTYTEPSEQPTYTESSEQ. Over residues 772 to 782 the composition is skewed to low complexity; the sequence is PRTLTATPRTN. The span at 783 to 820 shows a compositional bias: polar residues; sequence DLTTPRTNDLTTPRTNDLITPRTNDLSTPRTNDLNTPR. Acidic residues predominate over residues 872-881; sequence IENSDSESES. Low complexity predominate over residues 882-891; the sequence is SDSNSDSIIQ.

Belongs to the G-protein coupled receptor 3 family. GABA-B receptor subfamily.

Its subcellular location is the membrane. The protein is Metabotropic glutamate receptor-like protein N (grlN) of Dictyostelium discoideum (Social amoeba).